A 403-amino-acid polypeptide reads, in one-letter code: Acetate kinase (403 aa).

Mg(2+) is bound at residue asparagine 7. Residue lysine 14 coordinates ATP. A substrate-binding site is contributed by arginine 95. Aspartate 152 (proton donor/acceptor) is an active-site residue. Residues 212–216 (HLGNG), 286–288 (DMR), and 335–339 (GIGEN) contribute to the ATP site. Residue glutamate 389 participates in Mg(2+) binding.

The protein belongs to the acetokinase family. In terms of assembly, homodimer. Requires Mg(2+) as cofactor. Mn(2+) serves as cofactor.

The protein resides in the cytoplasm. It carries out the reaction acetate + ATP = acetyl phosphate + ADP. It functions in the pathway metabolic intermediate biosynthesis; acetyl-CoA biosynthesis; acetyl-CoA from acetate: step 1/2. Functionally, catalyzes the formation of acetyl phosphate from acetate and ATP. Can also catalyze the reverse reaction. The polypeptide is Acetate kinase (Desulfovibrio desulfuricans (strain ATCC 27774 / DSM 6949 / MB)).